We begin with the raw amino-acid sequence, 86 residues long: Large ribosomal subunit protein bL31B (86 aa).

It belongs to the bacterial ribosomal protein bL31 family. Type B subfamily. Part of the 50S ribosomal subunit.

The polypeptide is Large ribosomal subunit protein bL31B (Erwinia tasmaniensis (strain DSM 17950 / CFBP 7177 / CIP 109463 / NCPPB 4357 / Et1/99)).